A 201-amino-acid polypeptide reads, in one-letter code: UPF0056 membrane protein PYRAB13050 (201 aa).

The next 6 membrane-spanning stretches (helical) occupy residues 8–28 (FAVL…VPIF), 49–69 (ITVL…FKFF), 73–93 (VDAF…EMLS), 111–131 (VAVI…TTVM), 140–160 (PIVI…LASG), and 181–201 (LILT…AFGI).

The protein belongs to the UPF0056 (MarC) family.

The protein localises to the cell membrane. This Pyrococcus abyssi (strain GE5 / Orsay) protein is UPF0056 membrane protein PYRAB13050.